The following is a 602-amino-acid chain: GTP-binding protein 2 (602 aa).

Residues 16-64 (GGGPAVGGTLKARGAGSSSGCGGPKGKKKNGRNRGGKANNPPYLPPEAE) form a disordered region. The span at 40-50 (KGKKKNGRNRG) shows a compositional bias: basic residues. The region spanning 170–398 (FLDLRVAVLG…LNILPPLTNS (229 aa)) is the tr-type G domain. Residues 179-186 (GNVDSGKS), 260-264 (DLAGH), and 316-319 (SKID) contribute to the GTP site.

It belongs to the TRAFAC class translation factor GTPase superfamily. Classic translation factor GTPase family. GTPBP1 subfamily. In terms of tissue distribution, predominantly expressed in thymus, spleen, and testis. Expressed at lower levels in brain, lung, kidney, and ovary.

This chain is GTP-binding protein 2, found in Homo sapiens (Human).